Consider the following 249-residue polypeptide: Triosephosphate isomerase (249 aa).

Asn-9 to Lys-11 contributes to the substrate binding site. The Electrophile role is filled by His-95. Glu-167 functions as the Proton acceptor in the catalytic mechanism. Substrate contacts are provided by residues Gly-173, Ser-213, and Gly-234 to Gly-235.

This sequence belongs to the triosephosphate isomerase family. Homodimer.

It localises to the cytoplasm. The catalysed reaction is D-glyceraldehyde 3-phosphate = dihydroxyacetone phosphate. It participates in carbohydrate biosynthesis; gluconeogenesis. Its pathway is carbohydrate degradation; glycolysis; D-glyceraldehyde 3-phosphate from glycerone phosphate: step 1/1. In terms of biological role, involved in the gluconeogenesis. Catalyzes stereospecifically the conversion of dihydroxyacetone phosphate (DHAP) to D-glyceraldehyde-3-phosphate (G3P). In Dictyoglomus turgidum (strain DSM 6724 / Z-1310), this protein is Triosephosphate isomerase.